The primary structure comprises 353 residues: Ribosomal RNA large subunit methyltransferase M (353 aa).

Residues Ser179, 212–215 (APGG), Asp231, Asp251, and Asp267 each bind S-adenosyl-L-methionine. Lys296 (proton acceptor) is an active-site residue.

The protein belongs to the class I-like SAM-binding methyltransferase superfamily. RNA methyltransferase RlmE family. RlmM subfamily. In terms of assembly, monomer.

It is found in the cytoplasm. It catalyses the reaction cytidine(2498) in 23S rRNA + S-adenosyl-L-methionine = 2'-O-methylcytidine(2498) in 23S rRNA + S-adenosyl-L-homocysteine + H(+). In terms of biological role, catalyzes the 2'-O-methylation at nucleotide C2498 in 23S rRNA. The chain is Ribosomal RNA large subunit methyltransferase M from Laribacter hongkongensis (strain HLHK9).